We begin with the raw amino-acid sequence, 389 residues long: Apicidin F cluster transcription factor apf2 (389 aa).

Polar residues-rich tracts occupy residues 1–13 (MSPPSQDWSTITD) and 75–84 (PDSATPKPSL). Disordered regions lie at residues 1 to 27 (MSPPSQDWSTITDANERRKAQNRVAQR), 65 to 84 (PQSVEDHDTNPDSATPKPSL), and 219 to 239 (EVPNLGDSNEGSRSISTTKQP). Positions 12–38 (TDANERRKAQNRVAQRNYRSRQKLRVE) are basic DNA-binding region. ANK repeat units follow at residues 241-270 (EFKTPVLTAIAKGKLDIARLLISSGANIDT), 274-303 (HGRTNLHYAVSRSDAKTVRSLLELGADLLM), 307-336 (SGVTALHMAVGADDQDMVKLLLGWCEQQDR), and 357-386 (QNMTPLHLCVVMERMDMLKILLDYGADVNI).

It belongs to the bZIP family. Highly divergent.

It localises to the nucleus. Transcription factor that regulates the expression of the gene cluster that mediates the biosynthesis of apicidin F. Binds to the eight-base-pair motif 5'-TGACGTGA-3' called the 'Api-box' that is found in all promoters of the apicidin F cluster except in the promoter region of apf2 itself. In Gibberella fujikuroi (strain CBS 195.34 / IMI 58289 / NRRL A-6831) (Bakanae and foot rot disease fungus), this protein is Apicidin F cluster transcription factor apf2.